The chain runs to 518 residues: Nuclear receptor ROR-gamma (518 aa).

Residues 1–30 (MDRAPQRQHRASRELLAAKKTHTSQIEVIP) form a modulating region. NR C4-type zinc fingers lie at residues 31-51 (CKICGDKSSGIHYGVITCEGC) and 67-91 (CTRQQNCPIDRTSRNRCQHCRLQKC). The segment at residues 31-96 (CKICGDKSSG…RLQKCLALGM (66 aa)) is a DNA-binding region (nuclear receptor). 2 disordered regions span residues 105–183 (RMSK…SGSG) and 238–258 (HPGLGELGQGPDSYGSPSFRS). Basic and acidic residues predominate over residues 109 to 118 (KQRDSLHAEV). Over residues 119–130 (QKQLQQRQQQQQ) the composition is skewed to low complexity. Residues 269–508 (EIEHLVQSVC…PPLYKELFST (240 aa)) enclose the NR LBD domain. The short motif at 501–506 (LYKELF) is the AF-2 element.

It belongs to the nuclear hormone receptor family. NR1 subfamily. As to quaternary structure, interacts (via AF-2 motif) with the coactivator NCOA2 (via LXXLL motif). Interacts with the corepressor NCOR1. Interacts with CRY1. Interacts (via AF-2 motif) with the coactivators NCOA1 and PPARGC1A (via LXXLL motif). Interacts (via AF-2 motif) with PROX1. Interacts with FOXP3. Interacts with NR0B2. Isoform 1 is widely expressed in many tissues, including liver and adipose, and highly expressed in skeletal muscle. Isoform 2 is primarily expressed in immature thymocytes.

Its subcellular location is the nucleus. Its function is as follows. Nuclear receptor that binds DNA as a monomer to ROR response elements (RORE) containing a single core motif half-site 5'-AGGTCA-3' preceded by a short A-T-rich sequence. Key regulator of cellular differentiation, immunity, peripheral circadian rhythm as well as lipid, steroid, xenobiotics and glucose metabolism. Considered to have intrinsic transcriptional activity, have some natural ligands like oxysterols that act as agonists (25-hydroxycholesterol) or inverse agonists (7-oxygenated sterols), enhancing or repressing the transcriptional activity, respectively. Recruits distinct combinations of cofactors to target gene regulatory regions to modulate their transcriptional expression, depending on the tissue, time and promoter contexts. Regulates the circadian expression of clock genes such as CRY1, BMAL1 and NR1D1 in peripheral tissues and in a tissue-selective manner. Competes with NR1D1 for binding to their shared DNA response element on some clock genes such as BMAL1, CRY1 and NR1D1 itself, resulting in NR1D1-mediated repression or RORC-mediated activation of the expression, leading to the circadian pattern of clock genes expression. Therefore influences the period length and stability of the clock. Involved in the regulation of the rhythmic expression of genes involved in glucose and lipid metabolism, including PLIN2 and AVPR1A. Negative regulator of adipocyte differentiation through the regulation of early phase genes expression, such as MMP3. Controls adipogenesis as well as adipocyte size and modulates insulin sensitivity in obesity. In liver, has specific and redundant functions with RORA as positive or negative modulator of expression of genes encoding phase I and Phase II proteins involved in the metabolism of lipids, steroids and xenobiotics, such as SULT1E1. Also plays a role in the regulation of hepatocyte glucose metabolism through the regulation of G6PC1 and PCK1. Regulates the rhythmic expression of PROX1 and promotes its nuclear localization. Plays an indispensable role in the induction of IFN-gamma dependent anti-mycobacterial systemic immunity. In terms of biological role, essential for thymopoiesis and the development of several secondary lymphoid tissues, including lymph nodes and Peyer's patches. Required for the generation of LTi (lymphoid tissue inducer) cells. Regulates thymocyte survival through DNA-binding on ROREs of target gene promoter regions and recruitment of coactivaros via the AF-2. Also plays a key role, downstream of IL6 and TGFB and synergistically with RORA, for lineage specification of uncommitted CD4(+) T-helper (T(H)) cells into T(H)17 cells, antagonizing the T(H)1 program. Probably regulates IL17 and IL17F expression on T(H) by binding to the essential enhancer conserved non-coding sequence 2 (CNS2) in the IL17-IL17F locus. May also play a role in the pre-TCR activation cascade leading to the maturation of alpha/beta T-cells and may participate in the regulation of DNA accessibility in the TCR-J(alpha) locus. This Homo sapiens (Human) protein is Nuclear receptor ROR-gamma (RORC).